Consider the following 180-residue polypeptide: Cytidylate kinase (180 aa).

Position 7 to 15 (7 to 15 (GPPGSGKST)) interacts with ATP.

The protein belongs to the cytidylate kinase family. Type 2 subfamily.

The protein resides in the cytoplasm. It catalyses the reaction CMP + ATP = CDP + ADP. The enzyme catalyses dCMP + ATP = dCDP + ADP. This is Cytidylate kinase from Sulfurisphaera tokodaii (strain DSM 16993 / JCM 10545 / NBRC 100140 / 7) (Sulfolobus tokodaii).